The chain runs to 294 residues: 4-diphosphocytidyl-2-C-methyl-D-erythritol kinase (294 aa).

Lys-16 is a catalytic residue. 99–109 is a binding site for ATP; sequence PMGAGLGGGSS. Asp-141 is an active-site residue.

This sequence belongs to the GHMP kinase family. IspE subfamily.

The catalysed reaction is 4-CDP-2-C-methyl-D-erythritol + ATP = 4-CDP-2-C-methyl-D-erythritol 2-phosphate + ADP + H(+). It participates in isoprenoid biosynthesis; isopentenyl diphosphate biosynthesis via DXP pathway; isopentenyl diphosphate from 1-deoxy-D-xylulose 5-phosphate: step 3/6. In terms of biological role, catalyzes the phosphorylation of the position 2 hydroxy group of 4-diphosphocytidyl-2C-methyl-D-erythritol. This chain is 4-diphosphocytidyl-2-C-methyl-D-erythritol kinase, found in Polynucleobacter asymbioticus (strain DSM 18221 / CIP 109841 / QLW-P1DMWA-1) (Polynucleobacter necessarius subsp. asymbioticus).